The sequence spans 162 residues: Ribosome maturation factor RimP (162 aa).

It belongs to the RimP family.

It localises to the cytoplasm. Its function is as follows. Required for maturation of 30S ribosomal subunits. This chain is Ribosome maturation factor RimP, found in Beutenbergia cavernae (strain ATCC BAA-8 / DSM 12333 / CCUG 43141 / JCM 11478 / NBRC 16432 / NCIMB 13614 / HKI 0122).